We begin with the raw amino-acid sequence, 136 residues long: Nucleoside diphosphate kinase (136 aa).

K9, F57, R85, T91, R102, and N112 together coordinate ATP. The active-site Pros-phosphohistidine intermediate is H115.

Belongs to the NDK family. As to quaternary structure, homotetramer. The cofactor is Mg(2+).

The protein localises to the cytoplasm. The catalysed reaction is a 2'-deoxyribonucleoside 5'-diphosphate + ATP = a 2'-deoxyribonucleoside 5'-triphosphate + ADP. The enzyme catalyses a ribonucleoside 5'-diphosphate + ATP = a ribonucleoside 5'-triphosphate + ADP. In terms of biological role, major role in the synthesis of nucleoside triphosphates other than ATP. The ATP gamma phosphate is transferred to the NDP beta phosphate via a ping-pong mechanism, using a phosphorylated active-site intermediate. The protein is Nucleoside diphosphate kinase of Acetivibrio thermocellus (strain ATCC 27405 / DSM 1237 / JCM 9322 / NBRC 103400 / NCIMB 10682 / NRRL B-4536 / VPI 7372) (Clostridium thermocellum).